The chain runs to 149 residues: SsrA-binding protein (149 aa).

It belongs to the SmpB family.

The protein localises to the cytoplasm. Required for rescue of stalled ribosomes mediated by trans-translation. Binds to transfer-messenger RNA (tmRNA), required for stable association of tmRNA with ribosomes. tmRNA and SmpB together mimic tRNA shape, replacing the anticodon stem-loop with SmpB. tmRNA is encoded by the ssrA gene; the 2 termini fold to resemble tRNA(Ala) and it encodes a 'tag peptide', a short internal open reading frame. During trans-translation Ala-aminoacylated tmRNA acts like a tRNA, entering the A-site of stalled ribosomes, displacing the stalled mRNA. The ribosome then switches to translate the ORF on the tmRNA; the nascent peptide is terminated with the 'tag peptide' encoded by the tmRNA and targeted for degradation. The ribosome is freed to recommence translation, which seems to be the essential function of trans-translation. The polypeptide is SsrA-binding protein (Thermosipho africanus (strain TCF52B)).